The sequence spans 360 residues: AA9 family lytic polysaccharide monooxygenase A (360 aa).

An N-terminal signal peptide occupies residues 1–19 (MKTSFGLLALAAAAKLVNA). Positions 20 and 102 each coordinate Cu(2+). Cys-62 and Cys-183 are disulfide-bonded. His-169 is an O2 binding site. Tyr-180 lines the Cu(2+) pocket. Residues 254-293 (TSAASASSTKAPATTAAPVQTESAKPATSTTQAAAPTTLV) form a disordered region. The region spanning 322 to 358 (GVVKMYAQCGGMNYSGSTTCESGLTCKQWNPYYHQCV) is the CBM1 domain. Asn-334 is a glycosylation site (N-linked (GlcNAc...) asparagine).

It belongs to the polysaccharide monooxygenase AA9 family. It depends on Cu(2+) as a cofactor.

The protein localises to the secreted. It carries out the reaction [(1-&gt;4)-beta-D-glucosyl]n+m + reduced acceptor + O2 = 4-dehydro-beta-D-glucosyl-[(1-&gt;4)-beta-D-glucosyl]n-1 + [(1-&gt;4)-beta-D-glucosyl]m + acceptor + H2O.. In terms of biological role, lytic polysaccharide monooxygenase (LPMO) that depolymerizes crystalline and amorphous polysaccharides via the oxidation of scissile alpha- or beta-(1-4)-glycosidic bonds, yielding C4 oxidation products. Catalysis by LPMOs requires the reduction of the active-site copper from Cu(II) to Cu(I) by a reducing agent and H(2)O(2) or O(2) as a cosubstrate. In Aspergillus terreus (strain NIH 2624 / FGSC A1156), this protein is AA9 family lytic polysaccharide monooxygenase A (eglD).